Consider the following 36-residue polypeptide: Photosystem II reaction center protein Y (36 aa).

Residues 1-4 (MDSR) lie on the Lumenal side of the membrane. Residues 5–23 (LLIVLIPVLAAASWAVYNI) traverse the membrane as a helical segment. Residues 24 to 36 (GRVALQQFRKMTS) are Stromal-facing.

This sequence belongs to the PsbY family. PSII is composed of 1 copy each of membrane proteins PsbA, PsbB, PsbC, PsbD, PsbE, PsbF, PsbH, PsbI, PsbJ, PsbK, PsbL, PsbM, PsbT, PsbX, PsbY, PsbZ, Psb30/Ycf12, at least 3 peripheral proteins of the oxygen-evolving complex and a large number of cofactors. It forms dimeric complexes.

It is found in the plastid. It localises to the chloroplast thylakoid membrane. In terms of biological role, loosely associated component of the core of photosystem II (PSII), it is not always seen in crystals. PSII is a light-driven water plastoquinone oxidoreductase, using light energy to abstract electrons from H(2)O, generating a proton gradient subsequently used for ATP formation. This is Photosystem II reaction center protein Y from Porphyra purpurea (Red seaweed).